The following is a 366-amino-acid chain: Septin-1 (366 aa).

The Septin-type G domain maps to 22–295 (KGFDFTLMVA…EGYRARCLQS (274 aa)). The interval 32–39 (GESGLGKS) is G1 motif. Residues 32 to 39 (GESGLGKS), Thr-66, Gly-92, and 171 to 179 (KADALMPRE) each bind GTP. Residues 89–92 (DTPG) are G3 motif. The G4 motif stretch occupies residues 170-173 (GKAD). Ser-206 carries the post-translational modification Phosphoserine. GTP-binding residues include Gly-229 and Arg-244. Ser-247 bears the Phosphoserine mark. Thr-250 is modified (phosphothreonine). Phosphoserine; by AURKB is present on residues Ser-306 and Ser-314. Residues 347 to 366 (EKMQAQMQQSQAQGEQSDVL) form a disordered region. Residues 349–366 (MQAQMQQSQAQGEQSDVL) show a composition bias toward low complexity.

This sequence belongs to the TRAFAC class TrmE-Era-EngA-EngB-Septin-like GTPase superfamily. Septin GTPase family. As to quaternary structure, septins polymerize into heterooligomeric protein complexes that form filaments, and can associate with cellular membranes, actin filaments and microtubules. GTPase activity is required for filament formation. Interacts with AURKB.

It localises to the cytoplasm. The protein localises to the cytoskeleton. Its subcellular location is the microtubule organizing center. The protein resides in the centrosome. It is found in the midbody. In terms of biological role, filament-forming cytoskeletal GTPase. May play a role in cytokinesis (Potential). This chain is Septin-1, found in Mus musculus (Mouse).